We begin with the raw amino-acid sequence, 255 residues long: Flap endonuclease Xni (255 aa).

Asp105 is a Mg(2+) binding site. The region spanning 163–253 (QYQMLDFIAL…NLKQFRINPI (91 aa)) is the 5'-3' exonuclease domain. Leu172, Ala173, Pro181, Ile183, and Ile186 together coordinate K(+). The segment at 185-190 (GIGPKS) is interaction with DNA.

This sequence belongs to the Xni family. Mg(2+) serves as cofactor. The cofactor is K(+).

In terms of biological role, has flap endonuclease activity. During DNA replication, flap endonucleases cleave the 5'-overhanging flap structure that is generated by displacement synthesis when DNA polymerase encounters the 5'-end of a downstream Okazaki fragment. The polypeptide is Flap endonuclease Xni (Shewanella frigidimarina (strain NCIMB 400)).